Reading from the N-terminus, the 66-residue chain is UPF0370 protein YpfN (66 aa).

The chain crosses the membrane as a helical span at residues 4–24 (LAKYWWILVLVFLVGVLLNVI). Residues 39-66 (KPELPPHRDFNDKWDDEDDWPKKDQSKK) form a disordered region. Positions 42 to 51 (LPPHRDFNDK) are enriched in basic and acidic residues.

This sequence belongs to the UPF0370 family.

It is found in the cell membrane. The chain is UPF0370 protein YpfN from Salmonella arizonae (strain ATCC BAA-731 / CDC346-86 / RSK2980).